The chain runs to 222 residues: ATP-dependent dethiobiotin synthetase BioD 2 (222 aa).

T17 lines the Mg(2+) pocket. Residue K38 is part of the active site. T42 is a binding site for substrate. Residues D55 and E112 each coordinate Mg(2+). Residues D55, 112-115 (EGCG), 172-173 (NR), 201-203 (PYL), and E208 contribute to the ATP site.

This sequence belongs to the dethiobiotin synthetase family. Homodimer. The cofactor is Mg(2+).

It localises to the cytoplasm. The catalysed reaction is (7R,8S)-7,8-diammoniononanoate + CO2 + ATP = (4R,5S)-dethiobiotin + ADP + phosphate + 3 H(+). Its pathway is cofactor biosynthesis; biotin biosynthesis; biotin from 7,8-diaminononanoate: step 1/2. In terms of biological role, catalyzes a mechanistically unusual reaction, the ATP-dependent insertion of CO2 between the N7 and N8 nitrogen atoms of 7,8-diaminopelargonic acid (DAPA, also called 7,8-diammoniononanoate) to form a ureido ring. This is ATP-dependent dethiobiotin synthetase BioD 2 from Yersinia pestis.